The primary structure comprises 593 residues: Acetyl-coenzyme A transferase nodX (593 aa).

The segment at 572–593 (DEDEQGSGFRSGSGLGSGSIAD) is disordered. Residues 580–593 (FRSGSGLGSGSIAD) show a composition bias toward gly residues.

This sequence belongs to the CoA-transferase III family.

It participates in secondary metabolite biosynthesis. Acetyl-coenzyme A transferase; part of the gene cluster that mediates the biosynthesis of the indole diterpenes nodulisporic acids (NA). Nodulisporic acid A (NAA) and its chemically modified derivatives are of particular significance because of their highly potent insecticidal activity against blood-feeding arthropods and lack of observable adverse effects on mammals, in particular the tremogenicity associated with the paspaline-derived IDTs is not observed. The geranylgeranyl diphosphate (GGPP) synthase ggs1, localized outside of the cluster, is proposed to catalyze the first step in nodulisporic acid biosynthesis via conversion of farnesyl pyrophosphate and isopentyl pyrophosphate into geranylgeranyl pyrophosphate (GGPP). Condensation of indole-3-glycerol phosphate with GGPP by the prenyl transferase nodC then forms 3-geranylgeranylindole (3-GGI). Epoxidation by the FAD-dependent monooxygenase nodM leads to a single-epoxidized-GGI that is substrate of the terpene cyclase nodB for cyclization to yield emindole SB. The terminal methyl carbon, C28, of emindole SB is then oxidized by the cytochrome P450 monooxygenase nodW to produce nodulisporic acid F (NAF), the pentacyclic core of NAA. NAF is converted to nodulisporic acid E (NAE) via prenylation. This step is probably performed by one of the indole diterpene prenyltransferases nodD1 or nodD2. Several oxidation steps performed by the FAD-linked oxidoreductase nodO and one of the cytochrome P450 monooxygenase nodR, nodX or nodZ further convert NAE to nodulisporic acid D (NAD). NAD is substrate of cytochrome P450 monooxygenase nodJ to produce the precursor of nodulisporic acid C (NAC), converted to NAC by one of the indole diterpene prenyltransferases nodD1 or nodD2. The FAD-dependent monooxygenase nodY2 then oxidizes NAC to nodulisporic acid B (NAB). Finally NAB is converted to NAA by one of the cytochrome P450 monooxygenases nodR, nodX or nodZ. The chain is Acetyl-coenzyme A transferase nodX from Hypoxylon pulicicidum.